We begin with the raw amino-acid sequence, 413 residues long: Glucose-1-phosphate adenylyltransferase (413 aa).

Alpha-D-glucose 1-phosphate-binding positions include Tyr-102, Gly-167, 182–183, and Ser-200; that span reads EK.

Belongs to the bacterial/plant glucose-1-phosphate adenylyltransferase family. In terms of assembly, homotetramer.

The catalysed reaction is alpha-D-glucose 1-phosphate + ATP + H(+) = ADP-alpha-D-glucose + diphosphate. It functions in the pathway glycan biosynthesis; glycogen biosynthesis. In terms of biological role, involved in the biosynthesis of ADP-glucose, a building block required for the elongation reactions to produce glycogen. Catalyzes the reaction between ATP and alpha-D-glucose 1-phosphate (G1P) to produce pyrophosphate and ADP-Glc. The sequence is that of Glucose-1-phosphate adenylyltransferase from Deinococcus geothermalis (strain DSM 11300 / CIP 105573 / AG-3a).